The primary structure comprises 315 residues: 3-chlorobenzoate-3,4-dioxygenase reductase subunit (315 aa).

Position 1 to 103 (Met-1 to Arg-103) interacts with FMN. The 103-residue stretch at His-7–Asp-109 folds into the FAD-binding FR-type domain. Positions Asn-228 to Leu-315 constitute a 2Fe-2S ferredoxin-type domain. Positions 264, 269, 272, and 302 each coordinate [2Fe-2S] cluster.

This sequence belongs to the PDR/VanB family. This dioxygenase system consists of two proteins: phthalate oxygenase and phthalate oxygenase reductase. FMN is required as a cofactor.

The protein is 3-chlorobenzoate-3,4-dioxygenase reductase subunit (cbaB) of Comamonas testosteroni (Pseudomonas testosteroni).